We begin with the raw amino-acid sequence, 130 residues long: Fumarate reductase subunit C (130 aa).

The next 3 helical transmembrane spans lie at alanine 33–glycine 53, phenylalanine 60–alanine 80, and valine 109–leucine 129.

This sequence belongs to the FrdC family. Part of an enzyme complex containing four subunits: a flavoprotein (FrdA), an iron-sulfur protein (FrdB), and two hydrophobic anchor proteins (FrdC and FrdD).

Its subcellular location is the cell inner membrane. Two distinct, membrane-bound, FAD-containing enzymes are responsible for the catalysis of fumarate and succinate interconversion; fumarate reductase is used in anaerobic growth, and succinate dehydrogenase is used in aerobic growth. Anchors the catalytic components of the fumarate reductase complex to the cell inner membrane, binds quinones. The protein is Fumarate reductase subunit C of Photorhabdus laumondii subsp. laumondii (strain DSM 15139 / CIP 105565 / TT01) (Photorhabdus luminescens subsp. laumondii).